The chain runs to 131 residues: Glycine cleavage system H protein (131 aa).

The 83-residue stretch at 24–106 folds into the Lipoyl-binding domain; the sequence is RVTVGISDHA…YGEGWIFVVE (83 aa). Lys-65 bears the N6-lipoyllysine mark.

It belongs to the GcvH family. As to quaternary structure, the glycine cleavage system is composed of four proteins: P, T, L and H. The cofactor is (R)-lipoate.

Functionally, the glycine cleavage system catalyzes the degradation of glycine. The H protein shuttles the methylamine group of glycine from the P protein to the T protein. The sequence is that of Glycine cleavage system H protein from Xanthomonas axonopodis pv. citri (strain 306).